The following is a 71-amino-acid chain: Small ribosomal subunit protein bS21 (71 aa).

The interval His37 to Tyr71 is disordered. The span at Arg45 to Lys59 shows a compositional bias: basic residues. A compositionally biased stretch (basic and acidic residues) spans Leu60–Tyr71.

Belongs to the bacterial ribosomal protein bS21 family.

The protein is Small ribosomal subunit protein bS21 of Pseudoalteromonas translucida (strain TAC 125).